Reading from the N-terminus, the 569-residue chain is Endonuclease/exonuclease/phosphatase family domain-containing protein 1 (569 aa).

G2 carries the N-myristoyl glycine lipid modification. S16 and S25 each carry phosphoserine. Residues 38-67 (ERLNINTATEEELMTLPGVTRAVARSIVEY) form the HhH domain. S106, S110, S160, and S173 each carry phosphoserine. A disordered region spans residues 200 to 224 (SRPPSTHTNGGLTFTAKPHPSPTSL). Polar residues predominate over residues 202-211 (PPSTHTNGGL). T265 is subject to Phosphothreonine. The interval 549–569 (VPRNGNGVTLEPSEANIKHER) is disordered.

The chain is Endonuclease/exonuclease/phosphatase family domain-containing protein 1 (Eepd1) from Mus musculus (Mouse).